We begin with the raw amino-acid sequence, 359 residues long: Dual-specificity RNA methyltransferase RlmN (359 aa).

The Proton acceptor role is filled by E90. The 234-residue stretch at 109-342 folds into the Radical SAM core domain; that stretch reads HQERYTVCIS…CTIRESKGLD (234 aa). C116 and C347 are oxidised to a cystine. 3 residues coordinate [4Fe-4S] cluster: C123, C127, and C130. S-adenosyl-L-methionine contacts are provided by residues 173–174, S205, 228–230, and N304; these read GE and SLH. C347 functions as the S-methylcysteine intermediate in the catalytic mechanism.

Belongs to the radical SAM superfamily. RlmN family. Requires [4Fe-4S] cluster as cofactor.

It localises to the cytoplasm. The enzyme catalyses adenosine(2503) in 23S rRNA + 2 reduced [2Fe-2S]-[ferredoxin] + 2 S-adenosyl-L-methionine = 2-methyladenosine(2503) in 23S rRNA + 5'-deoxyadenosine + L-methionine + 2 oxidized [2Fe-2S]-[ferredoxin] + S-adenosyl-L-homocysteine. It catalyses the reaction adenosine(37) in tRNA + 2 reduced [2Fe-2S]-[ferredoxin] + 2 S-adenosyl-L-methionine = 2-methyladenosine(37) in tRNA + 5'-deoxyadenosine + L-methionine + 2 oxidized [2Fe-2S]-[ferredoxin] + S-adenosyl-L-homocysteine. Functionally, specifically methylates position 2 of adenine 2503 in 23S rRNA and position 2 of adenine 37 in tRNAs. m2A2503 modification seems to play a crucial role in the proofreading step occurring at the peptidyl transferase center and thus would serve to optimize ribosomal fidelity. The chain is Dual-specificity RNA methyltransferase RlmN from Sulfurovum sp. (strain NBC37-1).